Consider the following 286-residue polypeptide: MPKLLGSFISFKSPHYLVGSVRDAVSIKAQAFMIFLGAPHTALRVDPNRMQIDEGHTLMEQHNLSKSGMVVHAPYIINCASKDPVKQTFAIDVLTREVKLCHAVGAKLIVLHPGSAVEQTQTQALDHLIKVLNTVIANTKEVIICLETMAGKGNEIGRDLDQLKYVINHIEQQERIGVCLDTCHFHDSGNDFNNTAEIMETIDTKLGFEFLKVIHLNESKNVCGSKKDRHANLGEGMIGFDNLMRFIAQPQIKQIPIVLETPSDKHNYPAVYGAEIERIRAWFGAR.

Zn(2+) contacts are provided by His72, His112, Glu147, Asp181, His184, His215, Asp228, His230, and Glu260.

It belongs to the AP endonuclease 2 family. Zn(2+) is required as a cofactor.

The enzyme catalyses Endonucleolytic cleavage to 5'-phosphooligonucleotide end-products.. Functionally, endonuclease IV plays a role in DNA repair. It cleaves phosphodiester bonds at apurinic or apyrimidinic (AP) sites, generating a 3'-hydroxyl group and a 5'-terminal sugar phosphate. In Mycoplasma pneumoniae (strain ATCC 29342 / M129 / Subtype 1) (Mycoplasmoides pneumoniae), this protein is Probable endonuclease 4.